Reading from the N-terminus, the 773-residue chain is Protein YhgF (773 aa).

One can recognise an S1 motif domain in the interval 651–720; the sequence is GMILEGAVTN…QRKRIALTMR (70 aa). Residues 721–773 form a disordered region; sequence LDEQPGETNARRGGGNERPQNNRPAAKPRGREAQPAGNSAMMDALAAAMGKKR.

This is Protein YhgF (yhgF) from Escherichia coli (strain K12).